The primary structure comprises 295 residues: Pyridoxal 5'-phosphate synthase subunit PdxS (295 aa).

D-ribose 5-phosphate is bound at residue D25. The Schiff-base intermediate with D-ribose 5-phosphate role is filled by K82. G154 is a binding site for D-ribose 5-phosphate. R166 contacts D-glyceraldehyde 3-phosphate. D-ribose 5-phosphate-binding positions include G215 and 236–237 (GS).

Belongs to the PdxS/SNZ family. As to quaternary structure, in the presence of PdxT, forms a dodecamer of heterodimers.

The catalysed reaction is aldehydo-D-ribose 5-phosphate + D-glyceraldehyde 3-phosphate + L-glutamine = pyridoxal 5'-phosphate + L-glutamate + phosphate + 3 H2O + H(+). It participates in cofactor biosynthesis; pyridoxal 5'-phosphate biosynthesis. In terms of biological role, catalyzes the formation of pyridoxal 5'-phosphate from ribose 5-phosphate (RBP), glyceraldehyde 3-phosphate (G3P) and ammonia. The ammonia is provided by the PdxT subunit. Can also use ribulose 5-phosphate and dihydroxyacetone phosphate as substrates, resulting from enzyme-catalyzed isomerization of RBP and G3P, respectively. This chain is Pyridoxal 5'-phosphate synthase subunit PdxS, found in Listeria monocytogenes serotype 4b (strain CLIP80459).